A 189-amino-acid polypeptide reads, in one-letter code: Large ribosomal subunit protein eL18 (189 aa).

The protein belongs to the eukaryotic ribosomal protein eL18 family.

It is found in the cytoplasm. In Drosophila pseudoobscura pseudoobscura (Fruit fly), this protein is Large ribosomal subunit protein eL18 (RpL18).